Here is a 217-residue protein sequence, read N- to C-terminus: Cytokinin riboside 5'-monophosphate phosphoribohydrolase LOG7 (217 aa).

Residues glutamate 79, arginine 97–lysine 98, glycine 114–glutamate 120, and threonine 126 each bind substrate.

Belongs to the LOG family. Expressed in roots and shoots. Detected in the epidermis of the root elongation zone, cotyledon and leaves, in trichomes and pollen.

Its subcellular location is the cytoplasm. It is found in the nucleus. The catalysed reaction is N(6)-(dimethylallyl)adenosine 5'-phosphate + H2O = N(6)-dimethylallyladenine + D-ribose 5-phosphate. It carries out the reaction 9-ribosyl-trans-zeatin 5'-phosphate + H2O = trans-zeatin + D-ribose 5-phosphate. Cytokinin-activating enzyme working in the direct activation pathway. Phosphoribohydrolase that converts inactive cytokinin nucleotides to the biologically active free-base forms. The chain is Cytokinin riboside 5'-monophosphate phosphoribohydrolase LOG7 (LOG7) from Arabidopsis thaliana (Mouse-ear cress).